A 163-amino-acid polypeptide reads, in one-letter code: Nucleotide-binding protein NTHI1194 (163 aa).

The protein belongs to the YajQ family.

In terms of biological role, nucleotide-binding protein. The protein is Nucleotide-binding protein NTHI1194 of Haemophilus influenzae (strain 86-028NP).